The sequence spans 585 residues: Serine protease HtrA-like (585 aa).

The interval 1 to 184 (MDNNKKQVIP…QPKDKDNDNT (184 aa)) is disordered. Residues 21-82 (YFHNVEREER…IHQQRDDKSY (62 aa)) are compositionally biased toward basic and acidic residues. Polar residues predominate over residues 84-94 (QKTLNQNNQMN). Basic and acidic residues predominate over residues 95-113 (KSKDDDNKIGEESLHDVRV). Polar residues predominate over residues 114–124 (SSDTSTLPHQN). The segment covering 126–139 (SIKDYDDSGNESKQ) has biased composition (basic and acidic residues). Residues 151-175 (GVNSNHTEQDSRSTQPYSSKHSYSQ) show a composition bias toward polar residues. The helical transmembrane segment at 224–244 (MLIIIGIIVLLLILNAIFTTV) threads the bilayer. Residues His320, Asp350, and Ser435 each act as charge relay system in the active site. In terms of domain architecture, PDZ spans 516–575 (GVLIGEVKENGLGDKAGLKKGDVIVELDGKKIEDNLRYRQVIYSHYDDQKTITAKIYRNG).

The protein belongs to the peptidase S1C family.

It is found in the cell membrane. The polypeptide is Serine protease HtrA-like (Staphylococcus epidermidis (strain ATCC 35984 / DSM 28319 / BCRC 17069 / CCUG 31568 / BM 3577 / RP62A)).